The sequence spans 738 residues: NAD(P)H-quinone oxidoreductase subunit 5, chloroplastic (738 aa).

A run of 17 helical transmembrane segments spans residues 9–29, 39–59, 89–109, 125–145, 147–167, 185–205, 219–239, 258–278, 280–300, 327–347, 354–374, 396–416, 425–445, 542–562, 610–630, 691–711, and 717–737; these read WVIP…LFLI, IWAF…LHLS, VDPL…LVLI, FVYI…SNLI, IYFF…FWFT, GDFG…SLEF, NGIN…GAVA, TPIS…FLLA, LLPL…IGTI, LGYM…FHLI, ALLF…VGYS, TTFL…CFWS, WLYS…TAFY, LFPL…GIHF, SLAI…YSFF, GVID…GEEI, and GRIS…LFFI.

This sequence belongs to the complex I subunit 5 family. NDH is composed of at least 16 different subunits, 5 of which are encoded in the nucleus.

It localises to the plastid. It is found in the chloroplast thylakoid membrane. It carries out the reaction a plastoquinone + NADH + (n+1) H(+)(in) = a plastoquinol + NAD(+) + n H(+)(out). The catalysed reaction is a plastoquinone + NADPH + (n+1) H(+)(in) = a plastoquinol + NADP(+) + n H(+)(out). In terms of biological role, NDH shuttles electrons from NAD(P)H:plastoquinone, via FMN and iron-sulfur (Fe-S) centers, to quinones in the photosynthetic chain and possibly in a chloroplast respiratory chain. The immediate electron acceptor for the enzyme in this species is believed to be plastoquinone. Couples the redox reaction to proton translocation, and thus conserves the redox energy in a proton gradient. In Zea mays (Maize), this protein is NAD(P)H-quinone oxidoreductase subunit 5, chloroplastic (ndhF).